Reading from the N-terminus, the 474-residue chain is Trehalose-6-phosphate synthase (474 aa).

D-glucose 6-phosphate is bound at residue Arg10. 22 to 23 (GG) is a binding site for UDP-alpha-D-glucose. Residues Tyr77 and Asp131 each coordinate D-glucose 6-phosphate. UDP-alpha-D-glucose contacts are provided by Arg263 and Lys268. Residue Arg301 participates in D-glucose 6-phosphate binding. Residues Phe340 and 366–370 (LVAKE) contribute to the UDP-alpha-D-glucose site.

The protein belongs to the glycosyltransferase 20 family. In terms of assembly, homotetramer.

It catalyses the reaction D-glucose 6-phosphate + UDP-alpha-D-glucose = alpha,alpha-trehalose 6-phosphate + UDP + H(+). It functions in the pathway glycan biosynthesis; trehalose biosynthesis. Functionally, probably involved in the osmoprotection via the biosynthesis of trehalose. Catalyzes the transfer of glucose from UDP-alpha-D-glucose (UDP-Glc) to D-glucose 6-phosphate (Glc-6-P) to form trehalose-6-phosphate. Acts with retention of the anomeric configuration of the UDP-sugar donor. The chain is Trehalose-6-phosphate synthase from Enterobacter sp. (strain 638).